Here is a 269-residue protein sequence, read N- to C-terminus: Phosphate import ATP-binding protein PstB 1 (269 aa).

Residues 16 to 255 (FTTQNLDIYY…DRTGKVFGDP (240 aa)) form the ABC transporter domain. Position 48–55 (48–55 (GPSGCGKS)) interacts with ATP.

It belongs to the ABC transporter superfamily. Phosphate importer (TC 3.A.1.7) family. The complex is composed of two ATP-binding proteins (PstB), two transmembrane proteins (PstC and PstA) and a solute-binding protein (PstS).

It localises to the cell inner membrane. It catalyses the reaction phosphate(out) + ATP + H2O = ADP + 2 phosphate(in) + H(+). Part of the ABC transporter complex PstSACB involved in phosphate import. Responsible for energy coupling to the transport system. The chain is Phosphate import ATP-binding protein PstB 1 from Synechocystis sp. (strain ATCC 27184 / PCC 6803 / Kazusa).